A 312-amino-acid polypeptide reads, in one-letter code: MAGAGGDKPFAKAGPSPLSRVLRISQLDAFELDGALEQLVWSQFTQCFQHFKPGILTPVEPELKALLQLLLWRFTIYSNSATVGQSLLNIRYKNALIPGQKYRPMSRPQKFWFALLTVGEKWFRERSHSLFLNHPAESNARKARKVLSILLGLTKAASLVNFLLFLQRGTFPTLTERLLGVQPVFSRPQGPRDINFQYLNRELLWHGFAEFLIFLLPLINVWKLKAGVSALFSPLSDLTGTQSSEETHLTECAICGEWPTMPHSIGCKHVFCYYCVKSNVIADIYFTCPKCGAETGQIEPVRLQVGTELLQS.

At 1 to 22 the chain is on the peroxisomal matrix side; sequence MAGAGGDKPFAKAGPSPLSRVL. The helical transmembrane segment at 23–49 threads the bilayer; sequence RISQLDAFELDGALEQLVWSQFTQCFQ. Residues 50–55 are Cytoplasmic-facing; the sequence is HFKPGI. A helical transmembrane segment spans residues 56–81; that stretch reads LTPVEPELKALLQLLLWRFTIYSNSA. Over 82–105 the chain is Peroxisomal matrix; sequence TVGQSLLNIRYKNALIPGQKYRPM. Residues 106–132 form a helical membrane-spanning segment; sequence SRPQKFWFALLTVGEKWFRERSHSLFL. At 133 to 141 the chain is on the cytoplasmic side; it reads NHPAESNAR. Residues 142–168 form a helical membrane-spanning segment; that stretch reads KARKVLSILLGLTKAASLVNFLLFLQR. Residues 169-195 are Peroxisomal matrix-facing; the sequence is GTFPTLTERLLGVQPVFSRPQGPRDIN. Residues 196–219 traverse the membrane as a helical segment; the sequence is FQYLNRELLWHGFAEFLIFLLPLI. Topologically, residues 220-312 are cytoplasmic; that stretch reads NVWKLKAGVS…LQVGTELLQS (93 aa). 8 residues coordinate Zn(2+): Cys-252, Cys-255, Cys-267, His-269, Cys-272, Cys-275, Cys-288, and Cys-291. The RING-type zinc finger occupies 252–292; it reads CAICGEWPTMPHSIGCKHVFCYYCVKSNVIADIYFTCPKCG.

This sequence belongs to the pex2/pex10/pex12 family. Component of the PEX2-PEX10-PEX12 retrotranslocation channel.

The protein localises to the peroxisome membrane. It catalyses the reaction [E2 ubiquitin-conjugating enzyme]-S-ubiquitinyl-L-cysteine + [acceptor protein]-L-cysteine = [E2 ubiquitin-conjugating enzyme]-L-cysteine + [acceptor protein]-S-ubiquitinyl-L-cysteine.. The catalysed reaction is S-ubiquitinyl-[E2 ubiquitin-conjugating enzyme]-L-cysteine + [acceptor protein]-L-lysine = [E2 ubiquitin-conjugating enzyme]-L-cysteine + N(6)-ubiquitinyl-[acceptor protein]-L-lysine.. Its pathway is protein modification; protein ubiquitination. In terms of biological role, E3 ubiquitin-protein ligase component of a retrotranslocation channel required for peroxisome organization by mediating export of the PEX5 receptor from peroxisomes to the cytosol, thereby promoting PEX5 recycling. The retrotranslocation channel is composed of PEX2, PEX10 and PEX12; each subunit contributing transmembrane segments that coassemble into an open channel that specifically allows the passage of PEX5 through the peroxisomal membrane. PEX2 also regulates peroxisome organization by acting as a E3 ubiquitin-protein ligase. In Danio rerio (Zebrafish), this protein is Peroxisome biogenesis factor 2 (pex2).